The primary structure comprises 31 residues: Elongation factor Tu (31 aa).

It belongs to the GTP-binding elongation factor family. EF-Tu/EF-1A subfamily. In terms of assembly, monomer.

The protein resides in the cytoplasm. Functionally, this protein promotes the GTP-dependent binding of aminoacyl-tRNA to the A-site of ribosomes during protein biosynthesis. This is Elongation factor Tu (tuf) from Streptomyces laurentii.